A 314-amino-acid chain; its full sequence is Oxaloacetate tautomerase FAHD2B, mitochondrial (314 aa).

The transit peptide at 1–84 directs the protein to the mitochondrion; that stretch reads MLGSSGRRLL…ATLSVVRRAL (84 aa). Mg(2+) is bound by residues Glu-159, Glu-161, and Asp-190. Lys-203 carries the post-translational modification N6-acetyllysine; alternate. Lys-203 is subject to N6-succinyllysine; alternate. Position 234 is an N6-acetyllysine (Lys-234).

It belongs to the FAH family. The cofactor is Mg(2+). It depends on Mn(2+) as a cofactor.

Its subcellular location is the mitochondrion. The enzyme catalyses oxaloacetate = enol-oxaloacetate. Its function is as follows. Tautomerase that converts enol-oxaloacetate, a strong inhibitor of succinate dehydrogenase, to the physiological keto form of oxaloacetate. It is thereby required to maximize aerobic respiration efficiency by preventing succinate dehydrogenase inhibition. The chain is Oxaloacetate tautomerase FAHD2B, mitochondrial from Bos taurus (Bovine).